We begin with the raw amino-acid sequence, 185 residues long: Peptidyl-tRNA hydrolase (185 aa).

TRNA is bound at residue Tyr-14. His-19 (proton acceptor) is an active-site residue. Residues Tyr-65, Asn-67, and Asn-113 each coordinate tRNA.

It belongs to the PTH family. In terms of assembly, monomer.

The protein localises to the cytoplasm. It carries out the reaction an N-acyl-L-alpha-aminoacyl-tRNA + H2O = an N-acyl-L-amino acid + a tRNA + H(+). In terms of biological role, hydrolyzes ribosome-free peptidyl-tRNAs (with 1 or more amino acids incorporated), which drop off the ribosome during protein synthesis, or as a result of ribosome stalling. Catalyzes the release of premature peptidyl moieties from peptidyl-tRNA molecules trapped in stalled 50S ribosomal subunits, and thus maintains levels of free tRNAs and 50S ribosomes. The polypeptide is Peptidyl-tRNA hydrolase (Rickettsia africae (strain ESF-5)).